We begin with the raw amino-acid sequence, 231 residues long: Large ribosomal subunit protein uL1 (231 aa).

It belongs to the universal ribosomal protein uL1 family. In terms of assembly, part of the 50S ribosomal subunit.

Functionally, binds directly to 23S rRNA. The L1 stalk is quite mobile in the ribosome, and is involved in E site tRNA release. In terms of biological role, protein L1 is also a translational repressor protein, it controls the translation of the L11 operon by binding to its mRNA. The protein is Large ribosomal subunit protein uL1 of Pseudomonas fluorescens (strain Pf0-1).